A 110-amino-acid chain; its full sequence is ATP synthase subunit c (110 aa).

The next 3 membrane-spanning stretches (helical) occupy residues 4-24 (FFVILMVALVVVLTASAVFAA), 37-57 (ATAGALIGLGAAAGGGGAGMG), and 81-101 (FIVGLALIESLVIYVLVFVLI).

Belongs to the ATPase C chain family. F-type ATPases have 2 components, F(1) - the catalytic core - and F(0) - the membrane proton channel. F(1) has five subunits: alpha(3), beta(3), gamma(1), delta(1), epsilon(1). F(0) has three main subunits: a(1), b(2) and c(10-14). The alpha and beta chains form an alternating ring which encloses part of the gamma chain. F(1) is attached to F(0) by a central stalk formed by the gamma and epsilon chains, while a peripheral stalk is formed by the delta and b chains.

It localises to the cell inner membrane. Functionally, f(1)F(0) ATP synthase produces ATP from ADP in the presence of a proton or sodium gradient. F-type ATPases consist of two structural domains, F(1) containing the extramembraneous catalytic core and F(0) containing the membrane proton channel, linked together by a central stalk and a peripheral stalk. During catalysis, ATP synthesis in the catalytic domain of F(1) is coupled via a rotary mechanism of the central stalk subunits to proton translocation. Key component of the F(0) channel; it plays a direct role in translocation across the membrane. A homomeric c-ring of between 10-14 subunits forms the central stalk rotor element with the F(1) delta and epsilon subunits. The polypeptide is ATP synthase subunit c (Thermodesulfovibrio yellowstonii (strain ATCC 51303 / DSM 11347 / YP87)).